We begin with the raw amino-acid sequence, 504 residues long: ATP synthase subunit alpha 2 (504 aa).

Residue 169-176 participates in ATP binding; the sequence is GDRQTGKT.

This sequence belongs to the ATPase alpha/beta chains family. In terms of assembly, F-type ATPases have 2 components, CF(1) - the catalytic core - and CF(0) - the membrane proton channel. CF(1) has five subunits: alpha(3), beta(3), gamma(1), delta(1), epsilon(1). CF(0) has three main subunits: a(1), b(2) and c(9-12). The alpha and beta chains form an alternating ring which encloses part of the gamma chain. CF(1) is attached to CF(0) by a central stalk formed by the gamma and epsilon chains, while a peripheral stalk is formed by the delta and b chains.

It is found in the cell membrane. It catalyses the reaction ATP + H2O + 4 H(+)(in) = ADP + phosphate + 5 H(+)(out). Produces ATP from ADP in the presence of a proton gradient across the membrane. The alpha chain is a regulatory subunit. The sequence is that of ATP synthase subunit alpha 2 from Listeria welshimeri serovar 6b (strain ATCC 35897 / DSM 20650 / CCUG 15529 / CIP 8149 / NCTC 11857 / SLCC 5334 / V8).